A 106-amino-acid polypeptide reads, in one-letter code: Immunoglobulin lambda constant 6 (106 aa).

The Ig-like domain maps to 7–101 (PSVTLFPPSS…EGSTVEKTVA (95 aa)). A disulfide bond links cysteine 28 and cysteine 87.

In terms of assembly, immunoglobulins are composed of two identical heavy chains and two identical light chains; disulfide-linked.

It is found in the secreted. It localises to the cell membrane. In terms of biological role, constant region of immunoglobulin light chains. Immunoglobulins, also known as antibodies, are membrane-bound or secreted glycoproteins produced by B lymphocytes. In the recognition phase of humoral immunity, the membrane-bound immunoglobulins serve as receptors which, upon binding of a specific antigen, trigger the clonal expansion and differentiation of B lymphocytes into immunoglobulins-secreting plasma cells. Secreted immunoglobulins mediate the effector phase of humoral immunity, which results in the elimination of bound antigens. The antigen binding site is formed by the variable domain of one heavy chain, together with that of its associated light chain. Thus, each immunoglobulin has two antigen binding sites with remarkable affinity for a particular antigen. The variable domains are assembled by a process called V-(D)-J rearrangement and can then be subjected to somatic hypermutations which, after exposure to antigen and selection, allow affinity maturation for a particular antigen. The polypeptide is Immunoglobulin lambda constant 6 (Homo sapiens (Human)).